The sequence spans 444 residues: tRNA (guanine-N(7)-)-methyltransferase non-catalytic subunit TRM82 (444 aa).

7 WD repeats span residues 1 to 47 (MSVI…WSDD), 48 to 99 (FDKI…LGAP), 100 to 147 (PIYS…KRFC), 148 to 192 (FSKR…EPIL), 193 to 237 (GHVS…DKWL), 238 to 279 (FGHK…STFD), and 308 to 354 (FAVS…ITFP). Positions 55–92 (RNTTAKEQQGQSSENENENKKLKSNKGDSIKRTAAKVP) are disordered. Residues 71-85 (NENKKLKSNKGDSIK) are compositionally biased toward basic and acidic residues. S93 is modified (phosphoserine).

Belongs to the WD repeat TRM82 family. In terms of assembly, forms a heterodimer with the catalytic subunit TRM8.

The protein resides in the nucleus. It participates in tRNA modification; N(7)-methylguanine-tRNA biosynthesis. Its function is as follows. Required for the formation of N(7)-methylguanine at position 46 (m7G46) in tRNA, a modification required to maintain stability of tRNAs; its absence resulting in tRNA decay. In the complex, it is required to stabilize and induce conformational changes of the catalytic subunit. The chain is tRNA (guanine-N(7)-)-methyltransferase non-catalytic subunit TRM82 from Saccharomyces cerevisiae (strain RM11-1a) (Baker's yeast).